Consider the following 186-residue polypeptide: GTP cyclohydrolase 1 2 (186 aa).

It belongs to the GTP cyclohydrolase I family. In terms of assembly, homomer.

It carries out the reaction GTP + H2O = 7,8-dihydroneopterin 3'-triphosphate + formate + H(+). It functions in the pathway cofactor biosynthesis; 7,8-dihydroneopterin triphosphate biosynthesis; 7,8-dihydroneopterin triphosphate from GTP: step 1/1. This chain is GTP cyclohydrolase 1 2, found in Pseudomonas putida (strain ATCC 47054 / DSM 6125 / CFBP 8728 / NCIMB 11950 / KT2440).